Reading from the N-terminus, the 323-residue chain is 4-hydroxythreonine-4-phosphate dehydrogenase (323 aa).

Threonine 133 contributes to the substrate binding site. Residues histidine 161, histidine 206, and histidine 261 each coordinate a divalent metal cation. Lysine 269, asparagine 278, and arginine 287 together coordinate substrate.

It belongs to the PdxA family. In terms of assembly, homodimer. Zn(2+) is required as a cofactor. The cofactor is Mg(2+). Requires Co(2+) as cofactor.

Its subcellular location is the cytoplasm. It carries out the reaction 4-(phosphooxy)-L-threonine + NAD(+) = 3-amino-2-oxopropyl phosphate + CO2 + NADH. It functions in the pathway cofactor biosynthesis; pyridoxine 5'-phosphate biosynthesis; pyridoxine 5'-phosphate from D-erythrose 4-phosphate: step 4/5. In terms of biological role, catalyzes the NAD(P)-dependent oxidation of 4-(phosphooxy)-L-threonine (HTP) into 2-amino-3-oxo-4-(phosphooxy)butyric acid which spontaneously decarboxylates to form 3-amino-2-oxopropyl phosphate (AHAP). This Xanthomonas axonopodis pv. citri (strain 306) protein is 4-hydroxythreonine-4-phosphate dehydrogenase.